Consider the following 233-residue polypeptide: Antigenic membrane protein (233 aa).

A signal peptide spans 1–32 (MQNQKNQKSLVAKVLVLFAAVALMFVGVQVFA). The helical transmembrane segment at 206–226 (FLTLVAVVVVAAVAGGVFFFV) threads the bilayer.

It localises to the cell membrane. This Onion yellows phytoplasma (strain OY-M) protein is Antigenic membrane protein (amp).